Consider the following 33-residue polypeptide: Beta-theraphotoxin-Cm1a (33 aa).

3 disulfide bridges follow: Cys-2/Cys-17, Cys-9/Cys-22, and Cys-16/Cys-29. Leu-33 bears the Leucine amide mark.

This sequence belongs to the neurotoxin 10 (Hwtx-1) family. 04 (CcoTx1) subfamily. As to expression, expressed by the venom gland.

It is found in the secreted. Its function is as follows. Inhibits many voltage-gated sodium channels and one voltage-gated calcium channel (Cav2.2/CACNA1B (IC(50)=400 nM), Nav1.2/SCN2A (IC(50)=3-70 nM), Nav1.1/SCN1A (IC(50)=523-1060 nM), Nav1.7/SCN9A (IC(50)=129.1-5120 nM), Nav1.4/SCN4A (IC(50)=263-888 nM or &gt;10 uM) and Nav1.5/SCN5A (IC(50)=188-323 nM or &gt;10 uM)). It acts by shifting the voltage dependence of channel activation to more depolarized potentials and by blocking the inward component of the sodium current. It shows moderate affinity for lipid bilayers. On Nav1.7/SCN9A, it has been shown to interact with the S3-S4 loop of domain DII (site 4). Is significantly more potent against Nav1.2/SCN2A than the other Nav channel subtypes. In vivo, this toxin causes general ataxia, lack of response to stimuli, and semiparalysis. After a few minutes, the mice are unable to stand, and breathing is reduced in rhythm and intensity. Symptoms gradually increase with progressive slowing of breathing and flaccid paralysis, death occurred within 10 to 20 minutes post injection. Animals remain totally flaccid, and no symptoms of excitatory neurotoxicity are observed. This chain is Beta-theraphotoxin-Cm1a, found in Ceratogyrus marshalli (Straighthorned baboon tarantula).